The primary structure comprises 216 residues: Ras-related protein RABE1c (216 aa).

22 to 29 (GDSGVGKS) provides a ligand contact to GTP. An Effector region motif is present at residues 44–52 (FITTIGIDF). GTP contacts are provided by residues 70–74 (DTAGQ), 128–131 (NKAD), and 159–160 (SA). 2 S-geranylgeranyl cysteine lipidation sites follow: cysteine 213 and cysteine 214.

It belongs to the small GTPase superfamily. Rab family. In terms of assembly, interacts with PI5K2.

It is found in the golgi apparatus membrane. It localises to the cell membrane. Its function is as follows. Involved in membrane trafficking from the Golgi to the plasma membrane. The polypeptide is Ras-related protein RABE1c (RABE1C) (Arabidopsis thaliana (Mouse-ear cress)).